The following is a 155-amino-acid chain: Protein E6 (155 aa).

2 zinc fingers span residues 39-75 (CNFCGNFLDFLELCEFDKKRLCLIWKNYVVTACCRCC) and 112-148 (CQNCLSFLDIIEKLDCCGRGRPFHKVRGGWKGVCRLC).

This sequence belongs to the papillomaviridae E6 protein family. In terms of assembly, forms homodimers. Interacts with ubiquitin-protein ligase UBE3A/E6-AP; this interaction stimulates UBE3A ubiquitin activity. Interacts with host BAK1.

The protein localises to the host cytoplasm. It is found in the host nucleus. Functionally, plays a major role in the induction and maintenance of cellular transformation. E6 associates with host UBE3A/E6-AP ubiquitin-protein ligase and modulates its activity. Protects host keratinocytes from apoptosis by mediating the degradation of host BAK1. May also inhibit host immune response. The chain is Protein E6 from Homo sapiens (Human).